Reading from the N-terminus, the 430-residue chain is Serine--tRNA ligase (430 aa).

Residue 235 to 237 coordinates L-serine; that stretch reads TAE. Residues 266 to 268 and Val282 each bind ATP; that span reads RRE. Glu289 is a binding site for L-serine. Position 353–356 (353–356) interacts with ATP; the sequence is EASS. Ser389 is an L-serine binding site.

It belongs to the class-II aminoacyl-tRNA synthetase family. Type-1 seryl-tRNA synthetase subfamily. Homodimer. The tRNA molecule binds across the dimer.

The protein resides in the cytoplasm. It catalyses the reaction tRNA(Ser) + L-serine + ATP = L-seryl-tRNA(Ser) + AMP + diphosphate + H(+). The catalysed reaction is tRNA(Sec) + L-serine + ATP = L-seryl-tRNA(Sec) + AMP + diphosphate + H(+). Its pathway is aminoacyl-tRNA biosynthesis; selenocysteinyl-tRNA(Sec) biosynthesis; L-seryl-tRNA(Sec) from L-serine and tRNA(Sec): step 1/1. Its function is as follows. Catalyzes the attachment of serine to tRNA(Ser). Is also able to aminoacylate tRNA(Sec) with serine, to form the misacylated tRNA L-seryl-tRNA(Sec), which will be further converted into selenocysteinyl-tRNA(Sec). The polypeptide is Serine--tRNA ligase (Chlorobium phaeovibrioides (strain DSM 265 / 1930) (Prosthecochloris vibrioformis (strain DSM 265))).